A 311-amino-acid chain; its full sequence is Malate dehydrogenase (311 aa).

NAD(+) contacts are provided by residues 7–13 and Asp34; that span reads GAAGGIG. Substrate is bound by residues Arg81 and Arg87. NAD(+)-binding positions include Asn94 and 117–119; that span reads ITN. Residues Asn119 and Arg153 each coordinate substrate. Catalysis depends on His177, which acts as the Proton acceptor. Met227 provides a ligand contact to NAD(+).

The protein belongs to the LDH/MDH superfamily. MDH type 1 family. As to quaternary structure, homodimer.

It carries out the reaction (S)-malate + NAD(+) = oxaloacetate + NADH + H(+). Its function is as follows. Catalyzes the reversible oxidation of malate to oxaloacetate. This is Malate dehydrogenase from Yersinia enterocolitica serotype O:8 / biotype 1B (strain NCTC 13174 / 8081).